A 191-amino-acid polypeptide reads, in one-letter code: Glycerol-3-phosphate acyltransferase (191 aa).

5 helical membrane passes run 5-25 (IVFVLSYILGSIPFSLVITKI), 50-70 (CIAALALLLDSLKGFIAVYIA), 78-98 (SFHMYASAILVVLGHMFPVWL), 112-132 (ILIALNISLVLAFVFVWLAVF), and 153-173 (SFFFQRDLFFTLLTVAILIFF).

This sequence belongs to the PlsY family. In terms of assembly, probably interacts with PlsX.

The protein resides in the cell membrane. It carries out the reaction an acyl phosphate + sn-glycerol 3-phosphate = a 1-acyl-sn-glycero-3-phosphate + phosphate. Its pathway is lipid metabolism; phospholipid metabolism. Functionally, catalyzes the transfer of an acyl group from acyl-phosphate (acyl-PO(4)) to glycerol-3-phosphate (G3P) to form lysophosphatidic acid (LPA). This enzyme utilizes acyl-phosphate as fatty acyl donor, but not acyl-CoA or acyl-ACP. This Wolbachia sp. subsp. Brugia malayi (strain TRS) protein is Glycerol-3-phosphate acyltransferase.